A 694-amino-acid chain; its full sequence is Nuclear factor erythroid 2-related factor 3 (694 aa).

Residues 133–150 (ASSTGGAGASVDGGSQAV) show a composition bias toward low complexity. 2 disordered regions span residues 133-256 (ASST…LNGT) and 330-357 (DPTARTSQSQEPFLQLNSHTTNPEQTLP). Composition is skewed to basic and acidic residues over residues 193 to 217 (GVLREKHEAVDHSSQHEENEERVSA) and 231 to 254 (NKIAEKPDWEAEKTTESRNERHLN). Positions 333–357 (ARTSQSQEPFLQLNSHTTNPEQTLP) are enriched in polar residues. In terms of domain architecture, bZIP spans 578-641 (LIRDIRRRGK…NIMKQKLHDL (64 aa)). The interval 580-599 (RDIRRRGKNKVAAQNCRKRK) is basic motif. Residues 606–620 (LEDDVCNLQAKKETL) are leucine-zipper.

This sequence belongs to the bZIP family. CNC subfamily. In terms of assembly, heterodimer with MAFG, MAFK and other small MAF proteins that binds to the MAF recognition elements (MARE). Highly expressed in human placenta and also in B-cell and monocyte cell lines. Low expression in heart, brain, lung, skeletal muscle, kidney and pancreas.

The protein resides in the nucleus. Its function is as follows. Activates erythroid-specific, globin gene expression. This Homo sapiens (Human) protein is Nuclear factor erythroid 2-related factor 3 (NFE2L3).